The primary structure comprises 200 residues: MPIGTPSVPYRLPGSQMERWVDIYTRLGVERILFLGSEVNDGIANSLVAQMLYLDSEDSSKPIYLYINSPGGSVTAGLAIYDTIQYVKSEVVTICVGLAASMGAFLLAAGTKGKRVALPHSRIMIHQPLGGTSRRQASDIEIEAREILRMKEMLNRSLSDMSGQSFEKIEKDTDRDYFLSAEEAKEYGLIDRVISHPNEA.

The active-site Nucleophile is Ser-101. His-126 is a catalytic residue.

Belongs to the peptidase S14 family. In terms of assembly, fourteen ClpP subunits assemble into 2 heptameric rings which stack back to back to give a disk-like structure with a central cavity, resembling the structure of eukaryotic proteasomes.

It is found in the cytoplasm. The enzyme catalyses Hydrolysis of proteins to small peptides in the presence of ATP and magnesium. alpha-casein is the usual test substrate. In the absence of ATP, only oligopeptides shorter than five residues are hydrolyzed (such as succinyl-Leu-Tyr-|-NHMec, and Leu-Tyr-Leu-|-Tyr-Trp, in which cleavage of the -Tyr-|-Leu- and -Tyr-|-Trp bonds also occurs).. In terms of biological role, cleaves peptides in various proteins in a process that requires ATP hydrolysis. Has a chymotrypsin-like activity. Plays a major role in the degradation of misfolded proteins. The polypeptide is ATP-dependent Clp protease proteolytic subunit 3 (Synechococcus sp. (strain CC9605)).